Here is a 407-residue protein sequence, read N- to C-terminus: Probable tRNA sulfurtransferase (407 aa).

Residues 61–165 (NEITYRLSKI…LDAIYMYEEV (105 aa)) enclose the THUMP domain. ATP-binding positions include 183–184 (ML), 208–209 (HF), Arg265, Gly287, and Gln296.

This sequence belongs to the ThiI family.

The protein localises to the cytoplasm. It catalyses the reaction [ThiI sulfur-carrier protein]-S-sulfanyl-L-cysteine + a uridine in tRNA + 2 reduced [2Fe-2S]-[ferredoxin] + ATP + H(+) = [ThiI sulfur-carrier protein]-L-cysteine + a 4-thiouridine in tRNA + 2 oxidized [2Fe-2S]-[ferredoxin] + AMP + diphosphate. The enzyme catalyses [ThiS sulfur-carrier protein]-C-terminal Gly-Gly-AMP + S-sulfanyl-L-cysteinyl-[cysteine desulfurase] + AH2 = [ThiS sulfur-carrier protein]-C-terminal-Gly-aminoethanethioate + L-cysteinyl-[cysteine desulfurase] + A + AMP + 2 H(+). It participates in cofactor biosynthesis; thiamine diphosphate biosynthesis. Catalyzes the ATP-dependent transfer of a sulfur to tRNA to produce 4-thiouridine in position 8 of tRNAs, which functions as a near-UV photosensor. Also catalyzes the transfer of sulfur to the sulfur carrier protein ThiS, forming ThiS-thiocarboxylate. This is a step in the synthesis of thiazole, in the thiamine biosynthesis pathway. The sulfur is donated as persulfide by IscS. The sequence is that of Probable tRNA sulfurtransferase from Staphylococcus aureus (strain Mu3 / ATCC 700698).